A 235-amino-acid chain; its full sequence is MFIWTSGRTSSSYRHDEKRNIYQKIRDHDLLDKRKTVTALKAGEDRAILLGLAMMVCSIMMYFLLGITLLRSYMQSVWTEESQCTLLNASITETFNCSFSCGPDCWKLSQYPCLQVYVNLTSSGEKLLLYHTEETIKINQKCSYIPKCGKNFEESMSLVNVVMENFRKYQHFSCYSDPEGNQKSVILTKLYSSNVLFHSLFWPTCMMAGGVAIVAMVKLTQYLSLLCERIQRINR.

The ball and chain stretch occupies residues 1–45 (MFIWTSGRTSSSYRHDEKRNIYQKIRDHDLLDKRKTVTALKAGED). Residues 1–46 (MFIWTSGRTSSSYRHDEKRNIYQKIRDHDLLDKRKTVTALKAGEDR) are Cytoplasmic-facing. The chain crosses the membrane as a helical span at residues 47–67 (AILLGLAMMVCSIMMYFLLGI). Over 68-194 (TLLRSYMQSV…VILTKLYSSN (127 aa)) the chain is Extracellular. N-linked (GlcNAc...) asparagine glycans are attached at residues Asn-88, Asn-96, and Asn-119. The chain crosses the membrane as a helical span at residues 195 to 215 (VLFHSLFWPTCMMAGGVAIVA). Over 216–235 (MVKLTQYLSLLCERIQRINR) the chain is Cytoplasmic.

Belongs to the KCNMB (TC 8.A.14.1) family. KCNMB2 subfamily. Interacts with KCNMA1 tetramer. There are probably 4 molecules of KCMNB2 per KCNMA1 tetramer. In terms of processing, N-glycosylated. In terms of tissue distribution, expressed in kidney, heart and brain. Highly expressed in ovary. Expressed at low level in other tissues.

It is found in the membrane. Regulatory subunit of the calcium activated potassium KCNMA1 (maxiK) channel. Modulates the calcium sensitivity and gating kinetics of KCNMA1, thereby contributing to KCNMA1 channel diversity. Acts as a negative regulator that confers rapid and complete inactivation of KCNMA1 channel complex. May participate in KCNMA1 inactivation in chromaffin cells of the adrenal gland or in hippocampal CA1 neurons. The protein is Calcium-activated potassium channel subunit beta-2 (KCNMB2) of Homo sapiens (Human).